A 515-amino-acid polypeptide reads, in one-letter code: Nuclear hormone receptor family member nhr-62 (515 aa).

The segment at residues 95–170 is a DNA-binding region (nuclear receptor); it reads NLVCVVCGDQ…AGMNPRAVQS (76 aa). 2 consecutive NR C4-type zinc fingers follow at residues 98-118 and 134-153; these read CVVC…CNGC and CRFE…CRAC. The segment at 169 to 195 is disordered; sequence QSERVEREQNGSPNQIEEDDYKDLSSP. Positions 225 to 509 constitute an NR LBD domain; sequence EMAKLSEQIV…YLCHEVQFIQ (285 aa). Residues 498-509 form an AF-2 region; it reads SEYLCHEVQFIQ.

This sequence belongs to the nuclear hormone receptor family. In terms of tissue distribution, widely expressed at a low level in many tissues including the pharynx, sensory neurons, intestine, spermatheca, hypodermis, and excretory cell.

The protein resides in the nucleus. Orphan nuclear hormone receptor. Required for metabolic and physiologic responses associated with dietary-restriction-induced longevity. Modulates triglyceride and lipid metabolism and autophagy, associated with dietary-restriction, probably acting via regulation of transcription of target genes. The polypeptide is Nuclear hormone receptor family member nhr-62 (nhr-62) (Caenorhabditis elegans).